The following is a 251-amino-acid chain: Aliphatic sulfonates import ATP-binding protein SsuB (251 aa).

Positions 19–238 (GELRHVDKWY…PGEPGAHTER (220 aa)) constitute an ABC transporter domain. Residue 51 to 58 (GRSGSGKS) coordinates ATP.

It belongs to the ABC transporter superfamily. Aliphatic sulfonates importer (TC 3.A.1.17.2) family. In terms of assembly, the complex is composed of two ATP-binding proteins (SsuB), two transmembrane proteins (SsuC) and a solute-binding protein (SsuA).

Its subcellular location is the cell membrane. It carries out the reaction ATP + H2O + aliphatic sulfonate-[sulfonate-binding protein]Side 1 = ADP + phosphate + aliphatic sulfonateSide 2 + [sulfonate-binding protein]Side 1.. In terms of biological role, part of the ABC transporter complex SsuABC involved in aliphatic sulfonates import. Responsible for energy coupling to the transport system. The chain is Aliphatic sulfonates import ATP-binding protein SsuB from Mycobacterium avium (strain 104).